The sequence spans 269 residues: Cytochrome c oxidase subunit 3 (269 aa).

The next 7 membrane-spanning stretches (helical) occupy residues proline 21–methionine 41, isoleucine 45–tryptophan 65, glycine 90–phenylalanine 110, valine 127–alanine 147, alanine 167–isoleucine 187, valine 204–alanine 224, and isoleucine 247–tryptophan 267.

The protein belongs to the cytochrome c oxidase subunit 3 family. Component of the cytochrome c oxidase (complex IV, CIV), a multisubunit enzyme composed of a catalytic core of 3 subunits and several supernumerary subunits. The complex exists as a monomer or a dimer and forms supercomplexes (SCs) in the inner mitochondrial membrane with ubiquinol-cytochrome c oxidoreductase (cytochrome b-c1 complex, complex III, CIII).

The protein localises to the mitochondrion inner membrane. The catalysed reaction is 4 Fe(II)-[cytochrome c] + O2 + 8 H(+)(in) = 4 Fe(III)-[cytochrome c] + 2 H2O + 4 H(+)(out). In terms of biological role, component of the cytochrome c oxidase, the last enzyme in the mitochondrial electron transport chain which drives oxidative phosphorylation. The respiratory chain contains 3 multisubunit complexes succinate dehydrogenase (complex II, CII), ubiquinol-cytochrome c oxidoreductase (cytochrome b-c1 complex, complex III, CIII) and cytochrome c oxidase (complex IV, CIV), that cooperate to transfer electrons derived from NADH and succinate to molecular oxygen, creating an electrochemical gradient over the inner membrane that drives transmembrane transport and the ATP synthase. Cytochrome c oxidase is the component of the respiratory chain that catalyzes the reduction of oxygen to water. Electrons originating from reduced cytochrome c in the intermembrane space (IMS) are transferred via the dinuclear copper A center (CU(A)) of subunit 2 and heme A of subunit 1 to the active site in subunit 1, a binuclear center (BNC) formed by heme A3 and copper B (CU(B)). The BNC reduces molecular oxygen to 2 water molecules using 4 electrons from cytochrome c in the IMS and 4 protons from the mitochondrial matrix. This chain is Cytochrome c oxidase subunit 3 (COX3), found in Wickerhamomyces canadensis (Yeast).